A 177-amino-acid chain; its full sequence is Large ribosomal subunit protein uL10 (177 aa).

It belongs to the universal ribosomal protein uL10 family. As to quaternary structure, part of the ribosomal stalk of the 50S ribosomal subunit. The N-terminus interacts with L11 and the large rRNA to form the base of the stalk. The C-terminus forms an elongated spine to which L12 dimers bind in a sequential fashion forming a multimeric L10(L12)X complex.

Its function is as follows. Forms part of the ribosomal stalk, playing a central role in the interaction of the ribosome with GTP-bound translation factors. The polypeptide is Large ribosomal subunit protein uL10 (Variovorax paradoxus (strain S110)).